A 423-amino-acid polypeptide reads, in one-letter code: Histone deacetylase 14, chloroplastic (423 aa).

The transit peptide at Met-1–Cys-44 directs the protein to the chloroplast. Residues Asp-62–Leu-392 are histone deacetylase. His-202 acts as the Proton donor/acceptor in catalysis. The Zn(2+) site is built by Asp-239, His-241, and Asp-326.

Belongs to the histone deacetylase family. Interacts with PP2A2. Zn(2+) is required as a cofactor. Expressed in stems, leaves, flowers, siliques and mature seeds.

Its subcellular location is the nucleus. It is found in the cytoplasm. The protein localises to the plastid. It localises to the chloroplast stroma. The protein resides in the mitochondrion. It catalyses the reaction N-acetylserotonin + H2O = serotonin + acetate. The enzyme catalyses N-acetyltyramine + H2O = tyramine + acetate. The catalysed reaction is N-acetyltryptamine + H2O = tryptamine + acetate. It carries out the reaction melatonin + H2O = 5-methoxytryptamine + acetate. With respect to regulation, its activity is inhibited by trichostatin A (TSA), a known histone deacetylase inhibitor. Functionally, regulates lysine acetylation levels of plastid proteins related to photosynthesis. Involved in the regulation of the activation state of RuBisCO, which is controlled by lysine acetylation of RuBisCO activase under low-light conditions. Associates with alpha- and beta-tubulins and deacetylate alpha-tubulin. Does not seem to be required for the cellular patterning in the root epidermis. Involved in the regulation of melatonin biosynthesis by catalyzing the deacetylation of N-acetylserotonin to produce serotonin. N-acetylserotonin is methylated by acetylserotonin O-methyltransferase (ASMT) to produce melatonin (N-acetyl-5-methoxytryptamine). Deacetylates melatonin to produce 5-methoxytryptamine. In vitro, deacetylates N-acetyltyramine and N-acetyltryptamine to produce tyramine and tryptamine, respectively. The protein is Histone deacetylase 14, chloroplastic of Arabidopsis thaliana (Mouse-ear cress).